We begin with the raw amino-acid sequence, 213 residues long: 5''-phosphoribostamycin phosphatase (213 aa).

The active-site Tele-phosphohistidine intermediate is histidine 8. Histidine 155 is a catalytic residue.

This sequence belongs to the histidine phosphatase superfamily.

The catalysed reaction is 5''-phosphoribostamycin + H2O = ribostamycin + phosphate. Its pathway is antibiotic biosynthesis; butirosin biosynthesis. In terms of biological role, catalyzes dephosphorylation of 5''-phosphoribostamycin to generate ribostamycinin the biosynthetic pathway of butirosin. The protein is 5''-phosphoribostamycin phosphatase (btrP) of Niallia circulans (Bacillus circulans).